Reading from the N-terminus, the 150-residue chain is Large ribosomal subunit protein bL9 (150 aa).

Belongs to the bacterial ribosomal protein bL9 family.

Its function is as follows. Binds to the 23S rRNA. This is Large ribosomal subunit protein bL9 from Shewanella denitrificans (strain OS217 / ATCC BAA-1090 / DSM 15013).